Here is a 456-residue protein sequence, read N- to C-terminus: Histidine--tRNA ligase (456 aa).

Positions Met1–Arg20 are disordered.

This sequence belongs to the class-II aminoacyl-tRNA synthetase family. Homodimer.

It localises to the cytoplasm. The enzyme catalyses tRNA(His) + L-histidine + ATP = L-histidyl-tRNA(His) + AMP + diphosphate + H(+). The sequence is that of Histidine--tRNA ligase from Cupriavidus necator (strain ATCC 17699 / DSM 428 / KCTC 22496 / NCIMB 10442 / H16 / Stanier 337) (Ralstonia eutropha).